The following is a 475-amino-acid chain: Histidine--tRNA ligase (475 aa).

The protein belongs to the class-II aminoacyl-tRNA synthetase family. In terms of assembly, homodimer.

It is found in the cytoplasm. The catalysed reaction is tRNA(His) + L-histidine + ATP = L-histidyl-tRNA(His) + AMP + diphosphate + H(+). The protein is Histidine--tRNA ligase of Flavobacterium johnsoniae (strain ATCC 17061 / DSM 2064 / JCM 8514 / BCRC 14874 / CCUG 350202 / NBRC 14942 / NCIMB 11054 / UW101) (Cytophaga johnsonae).